A 131-amino-acid chain; its full sequence is D-ribose pyranase (131 aa).

The Proton donor role is filled by histidine 20. Substrate is bound by residues aspartate 28, histidine 98, and 120–122; that span reads FSN.

This sequence belongs to the RbsD / FucU family. RbsD subfamily. As to quaternary structure, homodecamer.

Its subcellular location is the cytoplasm. It catalyses the reaction beta-D-ribopyranose = beta-D-ribofuranose. Its pathway is carbohydrate metabolism; D-ribose degradation; D-ribose 5-phosphate from beta-D-ribopyranose: step 1/2. Catalyzes the interconversion of beta-pyran and beta-furan forms of D-ribose. This is D-ribose pyranase from Lactobacillus acidophilus (strain ATCC 700396 / NCK56 / N2 / NCFM).